Here is a 436-residue protein sequence, read N- to C-terminus: Trigger factor (436 aa).

The 86-residue stretch at 164 to 249 (GDTVVIDYKG…IHEIKEKQLP (86 aa)) folds into the PPIase FKBP-type domain.

The protein belongs to the FKBP-type PPIase family. Tig subfamily.

The protein resides in the cytoplasm. The enzyme catalyses [protein]-peptidylproline (omega=180) = [protein]-peptidylproline (omega=0). Its function is as follows. Involved in protein export. Acts as a chaperone by maintaining the newly synthesized protein in an open conformation. Functions as a peptidyl-prolyl cis-trans isomerase. This is Trigger factor from Limosilactobacillus reuteri (strain DSM 20016) (Lactobacillus reuteri).